Reading from the N-terminus, the 357-residue chain is Protein-L-isoaspartate O-methyltransferase domain-containing protein 1 (357 aa).

Gly-2 carries N-myristoyl glycine lipidation. Ser-64 is a catalytic residue. AdoMet binding motif stretches follow at residues 85-94 (LNLGSGTGYL), 160-164 (YDRIY), and 181-191 (LKVGGILVMPI). Positions 240-250 (VRNLQDLARIY) are BC-box. Positions 299 to 333 (PLDSEEDEKMEEDNKEEEEKDHNEAMKPEEPPQNL) are disordered. Residues 301–317 (DSEEDEKMEEDNKEEEE) are compositionally biased toward acidic residues. Residues 318-333 (KDHNEAMKPEEPPQNL) are compositionally biased toward basic and acidic residues. The segment at 341–344 (LPLP) is CUL-box.

The protein belongs to the methyltransferase superfamily. L-isoaspartyl/D-aspartyl protein methyltransferase family. As to quaternary structure, component of the probable ECS(PCMTD1) E3 ubiquitin-protein ligase complex, at least composed of CUL5, ELOB, ELOC, RBX2 and PCMTD1. Interacts (via the BC-box) with ELOB and ELOC; the interaction is direct and stabilizes PCMTD1.

It localises to the cytoplasm. The protein localises to the membrane. In terms of biological role, substrate recognition component of an ECS (Elongin BC-CUL5-SOCS-box protein) E3 ubiquitin ligase complex which mediates the ubiquitination and subsequent proteasomal degradation of target proteins. Specifically binds to the methyltransferase cofactor S-adenosylmethionine (AdoMet) via the N-terminal AdoMet binding motif, but does not display methyltransferase activity. May provide an alternate maintenance pathway for modified proteins by acting as a damage-specific E3 ubiquitin ligase adaptor protein. The chain is Protein-L-isoaspartate O-methyltransferase domain-containing protein 1 from Homo sapiens (Human).